Consider the following 282-residue polypeptide: Formamidopyrimidine-DNA glycosylase (282 aa).

Residue proline 2 is the Schiff-base intermediate with DNA of the active site. The active-site Proton donor is the glutamate 3. Residue lysine 60 is the Proton donor; for beta-elimination activity of the active site. DNA-binding residues include histidine 99, arginine 118, and lysine 163. The FPG-type zinc finger occupies 248–282; sequence LVYRRSGKNCKKCGEKILREKICGRSTHWCPNCQK. Arginine 272 functions as the Proton donor; for delta-elimination activity in the catalytic mechanism.

This sequence belongs to the FPG family. Monomer. Zn(2+) is required as a cofactor.

It catalyses the reaction Hydrolysis of DNA containing ring-opened 7-methylguanine residues, releasing 2,6-diamino-4-hydroxy-5-(N-methyl)formamidopyrimidine.. It carries out the reaction 2'-deoxyribonucleotide-(2'-deoxyribose 5'-phosphate)-2'-deoxyribonucleotide-DNA = a 3'-end 2'-deoxyribonucleotide-(2,3-dehydro-2,3-deoxyribose 5'-phosphate)-DNA + a 5'-end 5'-phospho-2'-deoxyribonucleoside-DNA + H(+). Involved in base excision repair of DNA damaged by oxidation or by mutagenic agents. Acts as a DNA glycosylase that recognizes and removes damaged bases. Has a preference for oxidized purines, such as 7,8-dihydro-8-oxoguanine (8-oxoG). Has AP (apurinic/apyrimidinic) lyase activity and introduces nicks in the DNA strand. Cleaves the DNA backbone by beta-delta elimination to generate a single-strand break at the site of the removed base with both 3'- and 5'-phosphates. This Prochlorococcus marinus (strain NATL1A) protein is Formamidopyrimidine-DNA glycosylase.